The sequence spans 293 residues: Elongation factor Ts (293 aa).

Positions 80-83 are involved in Mg(2+) ion dislocation from EF-Tu; that stretch reads TDFV.

The protein belongs to the EF-Ts family.

It localises to the cytoplasm. Functionally, associates with the EF-Tu.GDP complex and induces the exchange of GDP to GTP. It remains bound to the aminoacyl-tRNA.EF-Tu.GTP complex up to the GTP hydrolysis stage on the ribosome. This Herminiimonas arsenicoxydans protein is Elongation factor Ts.